Consider the following 419-residue polypeptide: Lipid II:glycine glycyltransferase (419 aa).

This sequence belongs to the FemABX family.

It is found in the cytoplasm. It catalyses the reaction beta-D-GlcNAc-(1-&gt;4)-Mur2Ac(oyl-L-Ala-D-isoglutaminyl-L-Lys-D-Ala-D-Ala)-di-trans,octa-cis-undecaprenyl diphosphate + glycyl-tRNA(Gly) = beta-D-GlcNAc-(1-&gt;4)-Mur2Ac(oyl-L-Ala-D-isoglutaminyl-L-Lys-(N(6)-Gly)-D-Ala-D-Ala)-di-trans,octa-cis-undecaprenyl diphosphate + tRNA(Gly) + H(+). Functionally, catalyzes the incorporation of amino acid(s) into the interchain peptide bridge of peptidoglycan, using aminoacyl-tRNA as amino acid donor. The protein is Lipid II:glycine glycyltransferase (femX) of Staphylococcus haemolyticus (strain JCSC1435).